Consider the following 31-residue polypeptide: Cytochrome b6-f complex subunit 6 (31 aa).

A helical transmembrane segment spans residues 4 to 24 (ITSYFGFLLAVLIITSSLFIG).

It belongs to the PetL family. In terms of assembly, the 4 large subunits of the cytochrome b6-f complex are cytochrome b6, subunit IV (17 kDa polypeptide, PetD), cytochrome f and the Rieske protein, while the 4 small subunits are PetG, PetL, PetM and PetN. The complex functions as a dimer.

It localises to the plastid. The protein localises to the chloroplast thylakoid membrane. In terms of biological role, component of the cytochrome b6-f complex, which mediates electron transfer between photosystem II (PSII) and photosystem I (PSI), cyclic electron flow around PSI, and state transitions. PetL is important for photoautotrophic growth as well as for electron transfer efficiency and stability of the cytochrome b6-f complex. This Phaseolus vulgaris (Kidney bean) protein is Cytochrome b6-f complex subunit 6.